The sequence spans 171 residues: MLKLLGAVFIVVATTWTGFEMAKIYTERPRQIRQLRAALQSLEAEIMYGHTPLHTASQQIAKQLAQPVSTLFSAFSDQLDKGSDSAKTAWEQSLKKVWDTLSLKKSEYEVLKQFGETLGIHDRISQQKHIKLALTHLEASEADAEQAQAKNEKMIKSLGFLAGLLLILLLM.

The protein is Stage III sporulation protein AB (spoIIIAB) of Bacillus subtilis (strain 168).